The chain runs to 118 residues: MDCIRILWSVAVGLLLVSWRPTMFAASPTCDTVQNILAPCAGFLTGQEPSKACCTGVNNLNNSRKTKADRVAVCNCIKELTKSIAYDPKRMPLLSTKCGVKPDFPAVDKNLDCSKLPV.

A signal peptide spans 1–25; it reads MDCIRILWSVAVGLLLVSWRPTMFA. 4 cysteine pairs are disulfide-bonded: cysteine 30–cysteine 76, cysteine 40–cysteine 53, cysteine 54–cysteine 98, and cysteine 74–cysteine 113.

This sequence belongs to the plant LTP family.

Plant non-specific lipid-transfer proteins transfer phospholipids as well as galactolipids across membranes. May play a role in wax or cutin deposition in the cell walls of expanding epidermal cells and certain secretory tissues. This is Non-specific lipid-transfer protein from Ambrosia artemisiifolia (Common ragweed).